The sequence spans 130 residues: Small ribosomal subunit protein uS9 (130 aa).

This sequence belongs to the universal ribosomal protein uS9 family.

In Photorhabdus laumondii subsp. laumondii (strain DSM 15139 / CIP 105565 / TT01) (Photorhabdus luminescens subsp. laumondii), this protein is Small ribosomal subunit protein uS9.